The primary structure comprises 376 residues: Actin-related protein T1 (376 aa).

It belongs to the actin family. In terms of tissue distribution, in skin, expressed in the basal, spinous and granular layers of the epidermis. Also expressed in hair follicles, sebaceaous glands, eccrine sweat glands and semen.

The protein resides in the cytoplasm. It is found in the cytoskeleton. It localises to the nucleus. Its subcellular location is the cytoplasmic vesicle. The protein localises to the secretory vesicle. The protein resides in the acrosome. Its function is as follows. Negatively regulates the Hedgehog (SHH) signaling. Binds to the promoter of the SHH signaling mediator, GLI1, and inhibits its expression. In Homo sapiens (Human), this protein is Actin-related protein T1.